A 393-amino-acid chain; its full sequence is Venom metalloproteinase BumaMPs1 (393 aa).

Residues 1-15 (MFVHLLVLLFAAVEA) form the signal peptide. A glycan (N-linked (GlcNAc...) asparagine) is linked at Asn-158. A Peptidase M12B domain is found at 167 to 377 (KCVKIEYVFV…RVEELITRRK (211 aa)). His-323 contacts Zn(2+). Glu-324 is an active-site residue. 2 residues coordinate Zn(2+): His-327 and His-333. A disintegrin-like domain region spans residues 378 to 393 (INHCIVETCDGKRKRN).

Belongs to the venom metalloproteinase (M12B) family. The cofactor is Zn(2+). Contains several disulfide bonds. In terms of tissue distribution, expressed by the venom gland.

It localises to the secreted. Its function is as follows. Metalloprotease. This chain is Venom metalloproteinase BumaMPs1, found in Olivierus martensii (Manchurian scorpion).